The sequence spans 447 residues: Signal recognition particle 54 kDa protein (447 aa).

Residues 108 to 115, 188 to 192, and 246 to 249 each bind GTP; these read GLYGMGKT, DTAGR, and TKLD.

The protein belongs to the GTP-binding SRP family. SRP54 subfamily. Part of the signal recognition particle protein translocation system, which is composed of SRP and FtsY. Archaeal SRP consists of a 7S RNA molecule of 300 nucleotides and two protein subunits: SRP54 and SRP19.

It is found in the cytoplasm. The catalysed reaction is GTP + H2O = GDP + phosphate + H(+). Its function is as follows. Involved in targeting and insertion of nascent membrane proteins into the cytoplasmic membrane. Binds to the hydrophobic signal sequence of the ribosome-nascent chain (RNC) as it emerges from the ribosomes. The SRP-RNC complex is then targeted to the cytoplasmic membrane where it interacts with the SRP receptor FtsY. This is Signal recognition particle 54 kDa protein from Methanopyrus kandleri (strain AV19 / DSM 6324 / JCM 9639 / NBRC 100938).